The sequence spans 390 residues: Succinate--CoA ligase [ADP-forming] subunit beta (390 aa).

Residues 9-248 (KEILRRHKAN…ITEEDPLEVQ (240 aa)) enclose the ATP-grasp domain. Residues Lys-50, 57 to 59 (GRG), Glu-103, Ile-106, and Glu-111 contribute to the ATP site. Mg(2+) contacts are provided by Asn-203 and Asp-217. Substrate is bound by residues Asn-268 and 325 to 327 (GIV).

This sequence belongs to the succinate/malate CoA ligase beta subunit family. Heterotetramer of two alpha and two beta subunits. Requires Mg(2+) as cofactor.

It catalyses the reaction succinate + ATP + CoA = succinyl-CoA + ADP + phosphate. It carries out the reaction GTP + succinate + CoA = succinyl-CoA + GDP + phosphate. The protein operates within carbohydrate metabolism; tricarboxylic acid cycle; succinate from succinyl-CoA (ligase route): step 1/1. In terms of biological role, succinyl-CoA synthetase functions in the citric acid cycle (TCA), coupling the hydrolysis of succinyl-CoA to the synthesis of either ATP or GTP and thus represents the only step of substrate-level phosphorylation in the TCA. The beta subunit provides nucleotide specificity of the enzyme and binds the substrate succinate, while the binding sites for coenzyme A and phosphate are found in the alpha subunit. The chain is Succinate--CoA ligase [ADP-forming] subunit beta from Leptospira interrogans serogroup Icterohaemorrhagiae serovar copenhageni (strain Fiocruz L1-130).